We begin with the raw amino-acid sequence, 175 residues long: Large ribosomal subunit protein bL17m (175 aa).

The transit peptide at 1 to 8 (MRLSVAAA) directs the protein to the mitochondrion. Positions 155–175 (DLRQSQEASNHSSHTAQTPGI) are disordered. The span at 161–175 (EASNHSSHTAQTPGI) shows a compositional bias: polar residues.

It belongs to the bacterial ribosomal protein bL17 family. Component of the mitochondrial large ribosomal subunit (mt-LSU). Mature mammalian 55S mitochondrial ribosomes consist of a small (28S) and a large (39S) subunit. The 28S small subunit contains a 12S ribosomal RNA (12S mt-rRNA) and 30 different proteins. The 39S large subunit contains a 16S rRNA (16S mt-rRNA), a copy of mitochondrial valine transfer RNA (mt-tRNA(Val)), which plays an integral structural role, and 52 different proteins. In terms of tissue distribution, detected in adrenal gland, mammary gland and adipose tissue.

It localises to the mitochondrion. This is Large ribosomal subunit protein bL17m (MRPL17) from Homo sapiens (Human).